The sequence spans 132 residues: Large ribosomal subunit protein uL14 (132 aa).

It belongs to the universal ribosomal protein uL14 family. As to quaternary structure, part of the 50S ribosomal subunit. Forms a cluster with proteins L3 and L24e, part of which may contact the 16S rRNA in 2 intersubunit bridges.

Its function is as follows. Binds to 23S rRNA. Forms part of two intersubunit bridges in the 70S ribosome. This Archaeoglobus fulgidus (strain ATCC 49558 / DSM 4304 / JCM 9628 / NBRC 100126 / VC-16) protein is Large ribosomal subunit protein uL14.